The chain runs to 326 residues: MSNISVIGTGSYVPNNIITNDFLSTIVDTSDEWIRTRTGILERRISKGENTIYMATESAKEAIKNANIEANDLDLIIVATLTPDNFMPSTACSVQKEIGAMNALCFDISAACSGFIYGLEIACSMLKNSFRNKALIIGAENLSKIVDWEDRNTCVLFGDGAGSAILSKTKEEGILEFHSGSNGLKGEHLTCGVLKANNTPNKNDSLEKNNFIKMNGKEIFRFAVGAMNETIYNIQEKTKWDLNEVKYIISHQANSRIIEYTAKKLNTEKDKFYMNLDKYGNTSAASIPIALDEMNKRGLLNKQDKIILVGFGGGLTFGGVAIVWSI.

Residues cysteine 112 and histidine 251 contribute to the active site. Positions 252-256 (QANSR) are ACP-binding. The active site involves asparagine 281.

Belongs to the thiolase-like superfamily. FabH family. In terms of assembly, homodimer.

Its subcellular location is the cytoplasm. It carries out the reaction malonyl-[ACP] + acetyl-CoA + H(+) = 3-oxobutanoyl-[ACP] + CO2 + CoA. The protein operates within lipid metabolism; fatty acid biosynthesis. Functionally, catalyzes the condensation reaction of fatty acid synthesis by the addition to an acyl acceptor of two carbons from malonyl-ACP. Catalyzes the first condensation reaction which initiates fatty acid synthesis and may therefore play a role in governing the total rate of fatty acid production. Possesses both acetoacetyl-ACP synthase and acetyl transacylase activities. Its substrate specificity determines the biosynthesis of branched-chain and/or straight-chain of fatty acids. In Clostridium botulinum (strain ATCC 19397 / Type A), this protein is Beta-ketoacyl-[acyl-carrier-protein] synthase III.